Here is a 152-residue protein sequence, read N- to C-terminus: UPF0260 protein BAB1_1496 (152 aa).

Belongs to the UPF0260 family.

In Brucella abortus (strain 2308), this protein is UPF0260 protein BAB1_1496.